The sequence spans 201 residues: Putative ferritin heavy polypeptide-like 19 (201 aa).

In terms of domain architecture, Ferritin-like diiron spans 1–123; it reads MAFYFDQDDA…GYLSNLHKMG (123 aa).

This sequence belongs to the ferritin family.

The protein is Putative ferritin heavy polypeptide-like 19 (FTH1P19) of Homo sapiens (Human).